The following is a 206-amino-acid chain: Protein GrpE (206 aa).

Residues 1–17 (MSNESIKAEQDLIHEGV) are compositionally biased toward basic and acidic residues. Positions 1 to 20 (MSNESIKAEQDLIHEGVESE) are disordered.

Belongs to the GrpE family. In terms of assembly, homodimer.

It localises to the cytoplasm. In terms of biological role, participates actively in the response to hyperosmotic and heat shock by preventing the aggregation of stress-denatured proteins, in association with DnaK and GrpE. It is the nucleotide exchange factor for DnaK and may function as a thermosensor. Unfolded proteins bind initially to DnaJ; upon interaction with the DnaJ-bound protein, DnaK hydrolyzes its bound ATP, resulting in the formation of a stable complex. GrpE releases ADP from DnaK; ATP binding to DnaK triggers the release of the substrate protein, thus completing the reaction cycle. Several rounds of ATP-dependent interactions between DnaJ, DnaK and GrpE are required for fully efficient folding. The chain is Protein GrpE from Shewanella oneidensis (strain ATCC 700550 / JCM 31522 / CIP 106686 / LMG 19005 / NCIMB 14063 / MR-1).